Here is a 351-residue protein sequence, read N- to C-terminus: RCC1 repeat-containing protein C10F6.04 (351 aa).

RCC1 repeat units lie at residues methionine 1 to glutamate 48, serine 50 to alanine 106, arginine 108 to asparagine 162, and glutamate 163 to glutamate 212.

It is found in the cytoplasm. It localises to the nucleus. The chain is RCC1 repeat-containing protein C10F6.04 from Schizosaccharomyces pombe (strain 972 / ATCC 24843) (Fission yeast).